Reading from the N-terminus, the 314-residue chain is MMSQEFAHLSVLLTETVAGLNIKEDGIYIDGTFGRGGHSREVLKHLGENGRLIAIDRDPQAIAAAEQFADDARFSIVHGGFGQLATYVEDLGLKGKIDGVLLDFGVSSPQLDDAERGFSFLRDGPLDMRMDNSQGETAADWIARAEIEDMAWVFKTYGEEKNSRHIARCIAADREKTPFLRTKELADLIARISKNKERNKHPATRVFQAIRIYINSELEQIDQALEGALSVLAPHGRLSVISFHSLEDRMVKRFIRRHCQGESVPHGLPITEAEINKSRLLKGIGKAIKPSEEEVERNTRARSSVLRIAERLEY.

Residues 36–38 (GGH), Asp56, Phe81, Asp103, and Gln110 each bind S-adenosyl-L-methionine.

It belongs to the methyltransferase superfamily. RsmH family.

It localises to the cytoplasm. It catalyses the reaction cytidine(1402) in 16S rRNA + S-adenosyl-L-methionine = N(4)-methylcytidine(1402) in 16S rRNA + S-adenosyl-L-homocysteine + H(+). Its function is as follows. Specifically methylates the N4 position of cytidine in position 1402 (C1402) of 16S rRNA. The chain is Ribosomal RNA small subunit methyltransferase H from Shewanella sediminis (strain HAW-EB3).